A 180-amino-acid polypeptide reads, in one-letter code: Translation initiation factor IF-3 (180 aa).

The protein belongs to the IF-3 family. As to quaternary structure, monomer.

Its subcellular location is the cytoplasm. In terms of biological role, IF-3 binds to the 30S ribosomal subunit and shifts the equilibrium between 70S ribosomes and their 50S and 30S subunits in favor of the free subunits, thus enhancing the availability of 30S subunits on which protein synthesis initiation begins. This is Translation initiation factor IF-3 from Shewanella oneidensis (strain ATCC 700550 / JCM 31522 / CIP 106686 / LMG 19005 / NCIMB 14063 / MR-1).